Reading from the N-terminus, the 107-residue chain is Nucleoid-associated protein BAbS19_I00290 (107 aa).

This sequence belongs to the YbaB/EbfC family. As to quaternary structure, homodimer.

The protein resides in the cytoplasm. It localises to the nucleoid. Binds to DNA and alters its conformation. May be involved in regulation of gene expression, nucleoid organization and DNA protection. The polypeptide is Nucleoid-associated protein BAbS19_I00290 (Brucella abortus (strain S19)).